A 429-amino-acid chain; its full sequence is Probable electron transfer flavoprotein-quinone oxidoreductase YdiS (429 aa).

8–22 (AIVVGAGVAGSVAAL) serves as a coordination point for FAD.

The protein belongs to the ETF-QO/FixC family. Requires FAD as cofactor.

Functionally, probably accepts electrons from YdiQ/YdiR and reduces a quinone. This Escherichia coli (strain K12) protein is Probable electron transfer flavoprotein-quinone oxidoreductase YdiS (ydiS).